A 102-amino-acid chain; its full sequence is Monothiol glutaredoxin-S9 (102 aa).

A Glutaredoxin domain is found at 1 to 101 (MDKVVRMSSE…PLVKPFQANL (101 aa)). Position 21 (Cys21) interacts with [2Fe-2S] cluster.

It belongs to the glutaredoxin family. CC-type subfamily.

It localises to the cytoplasm. Functionally, may only reduce GSH-thiol disulfides, but not protein disulfides. The chain is Monothiol glutaredoxin-S9 (GRXS9) from Arabidopsis thaliana (Mouse-ear cress).